Consider the following 1562-residue polypeptide: Cell surface antigen I/II (1562 aa).

The N-terminal stretch at 1-38 is a signal peptide; sequence MKVKKTYGFRKSKISKTLCGAVLGTVAAVSVAGQKVFA. Residues 42-54 show a composition bias toward low complexity; sequence TTTSDVDTKVVGT. Residues 42-91 are disordered; sequence TTTSDVDTKVVGTQTGNPATNLPEAQGSASKEAEQSQNQAGETNGSIPVE. The interval 60–551 is helical; sequence ATNLPEAQGS…SKAKYDQKIL (492 aa). Polar residues predominate over residues 76–87; the sequence is QSQNQAGETNGS. Ag I/II A repeat units lie at residues 147–221, 222–303, 304–385, and 386–467; these read KKTT…QKTN, AANQ…QEAN, AANE…KKAN, and AANE…QKDL. 2 disordered regions span residues 824-973 and 1482-1509; these read VPKV…PTDP and SNTV…RTST. Residues 943–958 are compositionally biased toward pro residues; that stretch reads PTPPTPTPDQPEPNKP. Residues 1500–1509 are compositionally biased toward low complexity; the sequence is QDPSSPRTST. Residues 1529-1533 carry the LPXTG sorting signal motif; sequence LPNTG. The residue at position 1532 (T1532) is a Pentaglycyl murein peptidoglycan amidated threonine. The propeptide at 1533 to 1562 is removed by sortase; sequence GVTNNAYMPLLGIIGLVTSFSLLGLKAKKD.

It belongs to the antigen I/II family. In terms of processing, detected as a 185 kDa cell surface protein, but also as 2 proteins in S.mutans culture supernatants of about 150 kDa (antigen I) and 50 kDa (antigen II); antigen II is only seen after proteolysis. Antigen I and II have the same N-terminus but different C-termini.

The protein resides in the secreted. It localises to the cell wall. In terms of biological role, surface protein antigen implicated in dental caries. The chain is Cell surface antigen I/II from Streptococcus mutans serotype c (strain ATCC 700610 / UA159).